A 182-amino-acid polypeptide reads, in one-letter code: Adenylate kinase isoenzyme 6 homolog (182 aa).

The segment at 1–20 (MATPETRRRPNILVTGSPGT) is disordered. 5 residues coordinate ATP: Gly-19, Gly-21, Lys-22, Ser-23, and Thr-24. The segment at 39-62 (EVSKEVRENNLQGDFDEQYNCHVL) is NMPbind. The tract at residues 116-126 (SRGYSEFKIKE) is LID. Arg-117 lines the ATP pocket.

This sequence belongs to the adenylate kinase family. AK6 subfamily. In terms of assembly, monomer and homodimer. Interacts with small ribosomal subunit protein uS11. Not a structural component of 43S pre-ribosomes, but transiently interacts with them by binding to uS11.

The protein resides in the cytoplasm. It localises to the nucleus. The enzyme catalyses AMP + ATP = 2 ADP. The catalysed reaction is ATP + H2O = ADP + phosphate + H(+). Broad-specificity nucleoside monophosphate (NMP) kinase that catalyzes the reversible transfer of the terminal phosphate group between nucleoside triphosphates and monophosphates. Also has ATPase activity. Involved in the late cytoplasmic maturation steps of the 40S ribosomal particles, specifically 18S rRNA maturation. While NMP activity is not required for ribosome maturation, ATPase activity is. Associates transiently with small ribosomal subunit protein uS11. ATP hydrolysis breaks the interaction with uS11. May temporarily remove uS11 from the ribosome to enable a conformational change of the ribosomal RNA that is needed for the final maturation step of the small ribosomal subunit. Its NMP activity may have a role in nuclear energy homeostasis. AMP and dAMP are the preferred substrates, but CMP and TMP are also good substrates. ATP and dATP are the best phosphate donors. The polypeptide is Adenylate kinase isoenzyme 6 homolog (Caenorhabditis elegans).